The primary structure comprises 1378 residues: DNA-directed RNA polymerase subunit beta (1378 aa).

This sequence belongs to the RNA polymerase beta chain family. In terms of assembly, the RNAP catalytic core consists of 2 alpha, 1 beta, 1 beta' and 1 omega subunit. When a sigma factor is associated with the core the holoenzyme is formed, which can initiate transcription.

It catalyses the reaction RNA(n) + a ribonucleoside 5'-triphosphate = RNA(n+1) + diphosphate. DNA-dependent RNA polymerase catalyzes the transcription of DNA into RNA using the four ribonucleoside triphosphates as substrates. This is DNA-directed RNA polymerase subunit beta from Mesorhizobium japonicum (strain LMG 29417 / CECT 9101 / MAFF 303099) (Mesorhizobium loti (strain MAFF 303099)).